We begin with the raw amino-acid sequence, 211 residues long: Pyridoxine/pyridoxamine 5'-phosphate oxidase (211 aa).

Substrate contacts are provided by residues 7–10 (RREY) and Lys65. Residues 60–65 (RIVLLK), 75–76 (YT), Arg81, Lys82, and Gln104 contribute to the FMN site. Substrate-binding residues include Tyr122, Arg126, and Ser130. Residues 139-140 (QS) and Trp184 each bind FMN. A substrate-binding site is contributed by 190–192 (RLH). Arg194 contributes to the FMN binding site.

This sequence belongs to the pyridoxamine 5'-phosphate oxidase family. In terms of assembly, homodimer. It depends on FMN as a cofactor.

It catalyses the reaction pyridoxamine 5'-phosphate + O2 + H2O = pyridoxal 5'-phosphate + H2O2 + NH4(+). It carries out the reaction pyridoxine 5'-phosphate + O2 = pyridoxal 5'-phosphate + H2O2. Its pathway is cofactor metabolism; pyridoxal 5'-phosphate salvage; pyridoxal 5'-phosphate from pyridoxamine 5'-phosphate: step 1/1. The protein operates within cofactor metabolism; pyridoxal 5'-phosphate salvage; pyridoxal 5'-phosphate from pyridoxine 5'-phosphate: step 1/1. Functionally, catalyzes the oxidation of either pyridoxine 5'-phosphate (PNP) or pyridoxamine 5'-phosphate (PMP) into pyridoxal 5'-phosphate (PLP). In Vibrio campbellii (strain ATCC BAA-1116), this protein is Pyridoxine/pyridoxamine 5'-phosphate oxidase.